The chain runs to 297 residues: tRNA-cytidine(32) 2-sulfurtransferase (297 aa).

Positions 45 to 50 (SGGKDS) match the PP-loop motif motif. C120, C123, and C211 together coordinate [4Fe-4S] cluster.

It belongs to the TtcA family. Homodimer. Mg(2+) is required as a cofactor. Requires [4Fe-4S] cluster as cofactor.

It is found in the cytoplasm. It catalyses the reaction cytidine(32) in tRNA + S-sulfanyl-L-cysteinyl-[cysteine desulfurase] + AH2 + ATP = 2-thiocytidine(32) in tRNA + L-cysteinyl-[cysteine desulfurase] + A + AMP + diphosphate + H(+). The protein operates within tRNA modification. Functionally, catalyzes the ATP-dependent 2-thiolation of cytidine in position 32 of tRNA, to form 2-thiocytidine (s(2)C32). The sulfur atoms are provided by the cysteine/cysteine desulfurase (IscS) system. In Vibrio parahaemolyticus serotype O3:K6 (strain RIMD 2210633), this protein is tRNA-cytidine(32) 2-sulfurtransferase.